The primary structure comprises 318 residues: Ribonuclease Z (318 aa).

His-62, His-64, Asp-66, His-67, His-139, Asp-210, and His-268 together coordinate Zn(2+). Catalysis depends on Asp-66, which acts as the Proton acceptor.

Belongs to the RNase Z family. Homodimer. Zn(2+) serves as cofactor.

It catalyses the reaction Endonucleolytic cleavage of RNA, removing extra 3' nucleotides from tRNA precursor, generating 3' termini of tRNAs. A 3'-hydroxy group is left at the tRNA terminus and a 5'-phosphoryl group is left at the trailer molecule.. Zinc phosphodiesterase, which displays some tRNA 3'-processing endonuclease activity. Probably involved in tRNA maturation, by removing a 3'-trailer from precursor tRNA. This chain is Ribonuclease Z, found in Microcystis aeruginosa (strain NIES-843 / IAM M-2473).